Here is a 298-residue protein sequence, read N- to C-terminus: uncharacterized protein (298 aa).

The protein to M.tuberculosis Rv1486c, M.bovis Mb1522c and M.avium MAV321.

This is an uncharacterized protein from Mycobacterium leprae (strain TN).